A 500-amino-acid polypeptide reads, in one-letter code: Probable malate:quinone oxidoreductase (500 aa).

The protein belongs to the MQO family. It depends on FAD as a cofactor.

The catalysed reaction is (S)-malate + a quinone = a quinol + oxaloacetate. The protein operates within carbohydrate metabolism; tricarboxylic acid cycle; oxaloacetate from (S)-malate (quinone route): step 1/1. This is Probable malate:quinone oxidoreductase from Corynebacterium aurimucosum (strain ATCC 700975 / DSM 44827 / CIP 107346 / CN-1) (Corynebacterium nigricans).